Consider the following 605-residue polypeptide: Glucose-6-phosphate isomerase (605 aa).

E410 functions as the Proton donor in the catalytic mechanism. Residues H441 and K569 contribute to the active site.

Belongs to the GPI family.

It is found in the cytoplasm. The enzyme catalyses alpha-D-glucose 6-phosphate = beta-D-fructose 6-phosphate. Its pathway is carbohydrate degradation; glycolysis; D-glyceraldehyde 3-phosphate and glycerone phosphate from D-glucose: step 2/4. The chain is Glucose-6-phosphate isomerase (PGI) from Leishmania mexicana.